Here is a 325-residue protein sequence, read N- to C-terminus: Heat-inducible transcription repressor HrcA (325 aa).

Belongs to the HrcA family.

Negative regulator of class I heat shock genes (grpE-dnaK-dnaJ and groELS operons). Prevents heat-shock induction of these operons. The polypeptide is Heat-inducible transcription repressor HrcA (Staphylococcus aureus (strain bovine RF122 / ET3-1)).